The following is a 378-amino-acid chain: MRPNKTSLLLALLSILSQANAYEYVNCFSSLPSDFSKADSYNWQSSSHCNSECSAKGASYFALYNHSECYCGDTNPSGSESTSSSCNTYCFGYSSEMCGGEDAYSVYQLDSDTNSNSISSSDSSTESTSASSSTTSSTTSSTTSTTSSTTSSTTSSMASSSTVQNSPESTQAAASISTSQSSSTVTSESSLTSDTLATSSTSSQSQDATSIIYSTTFHTEGGSTIFVTNTITASAQNSGSATGTAGSDSTSGSKTHKKKANVGAIVGGVVGGVVGAVAIALCILLIVRHINMKREQDRMEKEYQEAIKPVEYPDKLYASSFSSNHGPSSGSFEEEHTKGQTDINPFDDSRRISNGTFINGGPGGKNNVLTVVNPDEAD.

Residues 1–21 (MRPNKTSLLLALLSILSQANA) form the signal peptide. One can recognise a WSC domain in the interval 22 to 110 (YEYVNCFSSL…EDAYSVYQLD (89 aa)). Residues 22-264 (YEYVNCFSSL…THKKKANVGA (243 aa)) are Extracellular-facing. N-linked (GlcNAc...) asparagine glycosylation is present at N65. Disordered stretches follow at residues 115–201 (SNSI…TSST) and 236–256 (QNSGSATGTAGSDSTSGSKTH). Residues 236–253 (QNSGSATGTAGSDSTSGS) are compositionally biased toward low complexity. Residues 265–285 (IVGGVVGGVVGAVAIALCILL) form a helical membrane-spanning segment. The Cytoplasmic segment spans residues 286–378 (IVRHINMKRE…LTVVNPDEAD (93 aa)). Residues 318–378 (ASSFSSNHGP…LTVVNPDEAD (61 aa)) form a disordered region. Residues 319-331 (SSFSSNHGPSSGS) show a composition bias toward low complexity. Residues S331 and S353 each carry the phosphoserine modification.

Post-translationally, glycosylated. Phosphorylated. Phosphorylation serves a negative regulatory role.

The protein localises to the cell membrane. In terms of biological role, plays a role during G1 to regulate entering or exiting the cell cycle. Involved in stress responses. Has a role in cell wall integrity signaling. Activates ROM1 or ROM2 catalyzed guanine nucleotide exchange toward RHO1. Important regulator of the actin cytoskeleton rearrangements in conditions of cell wall expansion and membrane stretching. Specifically required for the actin reorganization induced by hypo-osmotic shock. Multicopy suppressor of 1,3-beta-glucan synthase (GS). Activates GS upstream of RHO1. Acts positively on the PKC1-MAPK pathway. Activates transiently SLT2 during alkaline stress, which leads to an increase in the expression of several specific genes. The protein is Protein SLG1 (SLG1) of Saccharomyces cerevisiae (strain ATCC 204508 / S288c) (Baker's yeast).